A 147-amino-acid polypeptide reads, in one-letter code: Large ribosomal subunit protein uL22 (147 aa).

Positions 110 to 147 (EEKKTVAKKAPAAKKTTTTKAPAKKTTSTKKATAKKES) are disordered. Residues 117-140 (KKAPAAKKTTTTKAPAKKTTSTKK) show a composition bias toward low complexity.

The protein belongs to the universal ribosomal protein uL22 family. As to quaternary structure, part of the 50S ribosomal subunit.

Functionally, this protein binds specifically to 23S rRNA; its binding is stimulated by other ribosomal proteins, e.g. L4, L17, and L20. It is important during the early stages of 50S assembly. It makes multiple contacts with different domains of the 23S rRNA in the assembled 50S subunit and ribosome. Its function is as follows. The globular domain of the protein is located near the polypeptide exit tunnel on the outside of the subunit, while an extended beta-hairpin is found that lines the wall of the exit tunnel in the center of the 70S ribosome. This Campylobacter jejuni subsp. jejuni serotype O:6 (strain 81116 / NCTC 11828) protein is Large ribosomal subunit protein uL22.